A 223-amino-acid chain; its full sequence is Cytotoxic T-lymphocyte protein 4 (223 aa).

An N-terminal signal peptide occupies residues 1–35 (MACLGFQRHKAQLNLATRTWPCTLLFFLLFIPVFC). Over 36 to 161 (KAMHVAQPAV…IDPEPCPDSD (126 aa)) the chain is Extracellular. The Ig-like V-type domain maps to 39-140 (HVAQPAVVLA…VELMYPPPYY (102 aa)). Positions 46–50 (VLASS) are homodimerization. 2 cysteine pairs are disulfide-bonded: C58/C129 and C85/C103. N113 carries N-linked (GlcNAc...) asparagine glycosylation. The tract at residues 134-139 (MYPPPY) is important for interaction with CD80 and CD86. A glycan (N-linked (GlcNAc...) asparagine) is linked at N145. The tract at residues 150-155 (YVIDPE) is homodimerization. The helical transmembrane segment at 162 to 182 (FLLWILAAVSSGLFFYSFLLT) threads the bilayer. The Cytoplasmic segment spans residues 183–223 (AVSLSKMLKKRSPLTTGVYVKMPPTEPECEKQFQPYFIPIN). At Y201 the chain carries Phosphotyrosine; by TXK and JAK2.

Homodimer; disulfide-linked. Binds to CD80/B7-1 and CD86/B7.2. Interacts with ICOSLG. Post-translationally, N-glycosylation is important for dimerization. In terms of processing, phosphorylation at Tyr-201 prevents binding to the AP-2 adapter complex, blocks endocytosis, and leads to retention of CTLA4 on the cell surface. As to expression, widely expressed with highest levels in lymphoid tissues. Detected in activated T-cells where expression levels are 30- to 50-fold less than CD28, the stimulatory coreceptor, on the cell surface following activation.

The protein resides in the cell membrane. Functionally, inhibitory receptor acting as a major negative regulator of T-cell responses. The affinity of CTLA4 for its natural B7 family ligands, CD80 and CD86, is considerably stronger than the affinity of their cognate stimulatory coreceptor CD28. The polypeptide is Cytotoxic T-lymphocyte protein 4 (CTLA4) (Homo sapiens (Human)).